The following is a 488-amino-acid chain: Bifunctional pantoate ligase/cytidylate kinase (488 aa).

Residue 1–8 (MGALHRAH) coordinates ATP. Residues 1–251 (MGALHRAHGQ…CGETRLIDHT (251 aa)) form a pantoate--beta-alanine ligase region. His8 serves as the catalytic Proton donor. A (R)-pantoate-binding site is contributed by Gln36. Gln36 is a binding site for beta-alanine. Residue 125-128 (GEKD) coordinates ATP. Residue Gln131 participates in (R)-pantoate binding. ATP-binding positions include Val154 and 162 to 165 (CSSR). A cytidylate kinase region spans residues 252-488 (FLMSRQPIVA…PEEVWPTPGS (237 aa)).

In the N-terminal section; belongs to the pantothenate synthetase family. This sequence in the C-terminal section; belongs to the cytidylate kinase family. Type 1 subfamily.

The protein localises to the cytoplasm. It carries out the reaction (R)-pantoate + beta-alanine + ATP = (R)-pantothenate + AMP + diphosphate + H(+). It catalyses the reaction CMP + ATP = CDP + ADP. The enzyme catalyses dCMP + ATP = dCDP + ADP. It functions in the pathway cofactor biosynthesis; (R)-pantothenate biosynthesis; (R)-pantothenate from (R)-pantoate and beta-alanine: step 1/1. Its function is as follows. Catalyzes the condensation of pantoate with beta-alanine in an ATP-dependent reaction via a pantoyl-adenylate intermediate. Catalyzes the transfer of a phosphate group from ATP to either CMP or dCMP to form CDP or dCDP and ADP, respectively. This chain is Bifunctional pantoate ligase/cytidylate kinase, found in Prochlorococcus marinus (strain MIT 9303).